We begin with the raw amino-acid sequence, 525 residues long: GMP synthase [glutamine-hydrolyzing] (525 aa).

Residues 8-207 (KILILDFGSQ…ALDICGCAAN (200 aa)) enclose the Glutamine amidotransferase type-1 domain. Cys85 (nucleophile) is an active-site residue. Residues His181 and Glu183 contribute to the active site. The GMPS ATP-PPase domain maps to 208 to 400 (WKPSSIIEDA…LGLPYNMLYR (193 aa)). 235 to 241 (SGGVDSS) contributes to the ATP binding site.

As to quaternary structure, homodimer.

It carries out the reaction XMP + L-glutamine + ATP + H2O = GMP + L-glutamate + AMP + diphosphate + 2 H(+). Its pathway is purine metabolism; GMP biosynthesis; GMP from XMP (L-Gln route): step 1/1. Its function is as follows. Catalyzes the synthesis of GMP from XMP. The protein is GMP synthase [glutamine-hydrolyzing] of Shewanella sp. (strain ANA-3).